A 315-amino-acid polypeptide reads, in one-letter code: Outer membrane protease OmpP (315 aa).

The signal sequence occupies residues Met-1–Ala-23. Residues Asp-103, Asp-105, Asp-230, and His-232 contribute to the active site.

The protein belongs to the peptidase A26 family.

The protein resides in the cell outer membrane. In terms of biological role, protease; also acts as a receptor for bacteriophage Ox2. In Escherichia coli (strain K12), this protein is Outer membrane protease OmpP (ompP).